Reading from the N-terminus, the 538-residue chain is Putative outer membrane porin BglH (538 aa).

Positions 1 to 25 (MFRRNLITSAILLMAPLAFSAQSLA) are cleaved as a signal peptide. The disordered stretch occupies residues 52-82 (KDEEKKKYTPATVNRSVSTNDQGYAANPFPT). Residues 62–73 (ATVNRSVSTNDQ) show a composition bias toward polar residues.

The protein belongs to the porin LamB (TC 1.B.3) family.

It is found in the cell outer membrane. Its function is as follows. May be a sugar porin with a broad carbohydrate specificity. The protein is Putative outer membrane porin BglH (bglH) of Escherichia coli O139:H28 (strain E24377A / ETEC).